A 381-amino-acid chain; its full sequence is Spindlin interactor and repressor of chromatin-binding protein (381 aa).

Residues 42–73 (RVTQQEKTPPPRPSPLEAGSDGCEEPKQQVSW) are disordered. Lys48 is covalently cross-linked (Glycyl lysine isopeptide (Lys-Gly) (interchain with G-Cter in SUMO2)). Ser121 and Ser148 each carry phosphoserine. 3 disordered regions span residues 144–264 (AEQP…EVRH), 283–320 (QLRG…LRGT), and 339–381 (LQDW…GNGV). Residues Lys189 and Lys220 each participate in a glycyl lysine isopeptide (Lys-Gly) (interchain with G-Cter in SUMO2) cross-link. The span at 218–228 (RWKEPPGEEPV) shows a compositional bias: basic and acidic residues. Residues Ser248 and Ser251 each carry the phosphoserine modification. The span at 287 to 299 (PDSKDSPKDREVA) shows a compositional bias: basic and acidic residues. Glycyl lysine isopeptide (Lys-Gly) (interchain with G-Cter in SUMO2) cross-links involve residues Lys290 and Lys294. 2 positions are modified to phosphoserine: Ser308 and Ser310. A Glycyl lysine isopeptide (Lys-Gly) (interchain with G-Cter in SUMO2) cross-link involves residue Lys374.

As to quaternary structure, interacts with SPIN1, SPIN2A, SPIN2B, SPIN3 and SPIN4. Interacts with TCF7L2 in a SPIN1-dependent manner. Interacts with PARP1; promoting PARP1 ADP-ribosyltransferase activity.

It is found in the nucleus. It localises to the chromosome. Functionally, chromatin protein that stabilizes SPIN1 and enhances its association with histone H3 trimethylated at both 'Lys-4' and 'Lys-9' (H3K4me3K9me3). Positively regulates poly-ADP-ribosylation in response to DNA damage; acts by facilitating PARP1 ADP-ribosyltransferase activity. The sequence is that of Spindlin interactor and repressor of chromatin-binding protein from Homo sapiens (Human).